A 63-amino-acid chain; its full sequence is UPF0337 protein SERP0494 (63 aa).

Positions 1–46 (MAEDKFEQAKGNIKETVGNATDNKELEKDGKGDKASGKAKEAVENV) are disordered. Over residues 22–46 (DNKELEKDGKGDKASGKAKEAVENV) the composition is skewed to basic and acidic residues.

It belongs to the UPF0337 (CsbD) family.

In Staphylococcus epidermidis (strain ATCC 35984 / DSM 28319 / BCRC 17069 / CCUG 31568 / BM 3577 / RP62A), this protein is UPF0337 protein SERP0494.